A 222-amino-acid polypeptide reads, in one-letter code: MFSKEVTESKVFQWFNDRLEVQAISDDIASKYVPPHVNIFYCLGGLTLTCFLIQFATGFAMTFYYKPTVTEAFASVQYIMNEVNFGWLIRSIHRWSASMMVLMMILHVFRVYLTGGFKKPRELTWVVGVMLAVTTVTFGVTGYSLPWDQVGYWAVKIVSGVPAAIPVVGDQLVTLMRGSESVGQATLTRFYSLHTFVLPWAIAVLLLLHFLMIRKQGISGPL.

Residues 39–59 (IFYCLGGLTLTCFLIQFATGF) form a helical membrane-spanning segment. Tyr-41 contacts heme b. Cys-42 contacts heme c. Arg-90, His-93, Arg-94, His-107, and Arg-110 together coordinate heme b. 3 consecutive transmembrane segments (helical) span residues 97–117 (ASMM…TGGF), 123–143 (LTWV…VTGY), and 193–213 (LHTF…FLMI). 2 residues coordinate heme b: His-194 and His-209. 2 residues coordinate heme c: Arg-214 and Ile-218. Ser-219 contacts heme b.

This sequence belongs to the cytochrome b family. PetB subfamily. The 4 large subunits of the cytochrome b6-f complex are cytochrome b6, subunit IV (17 kDa polypeptide, PetD), cytochrome f and the Rieske protein, while the 4 small subunits are PetG, PetL, PetM and PetN. The complex functions as a dimer. Heme b serves as cofactor. It depends on heme c as a cofactor.

The protein localises to the cellular thylakoid membrane. Its function is as follows. Component of the cytochrome b6-f complex, which mediates electron transfer between photosystem II (PSII) and photosystem I (PSI), cyclic electron flow around PSI, and state transitions. This is Cytochrome b6 from Synechocystis sp. (strain ATCC 27184 / PCC 6803 / Kazusa).